The sequence spans 306 residues: GTPase Era (306 aa).

In terms of domain architecture, Era-type G spans 13 to 181 (YCGFIAIVGR…EKIVRESLHE (169 aa)). Positions 21–28 (GRPNVGKS) are G1. Residue 21 to 28 (GRPNVGKS) participates in GTP binding. The G2 stretch occupies residues 47-51 (QTTRH). The interval 68–71 (DTPG) is G3. GTP is bound by residues 68–72 (DTPGL) and 130–133 (NKID). A G4 region spans residues 130-133 (NKID). Residues 160–162 (ISA) form a G5 region. Residues 212 to 289 (TGDELPYSVT…HLELWVKVKS (78 aa)) enclose the KH type-2 domain.

Belongs to the TRAFAC class TrmE-Era-EngA-EngB-Septin-like GTPase superfamily. Era GTPase family. Monomer.

It is found in the cytoplasm. The protein localises to the cell inner membrane. In terms of biological role, an essential GTPase that binds both GDP and GTP, with rapid nucleotide exchange. Plays a role in 16S rRNA processing and 30S ribosomal subunit biogenesis and possibly also in cell cycle regulation and energy metabolism. This Pasteurella multocida (strain Pm70) protein is GTPase Era.